A 518-amino-acid polypeptide reads, in one-letter code: 4-trimethylaminobutyraldehyde dehydrogenase B (518 aa).

NAD(+)-binding positions include lysine 204 and 256–260; that span reads GSVPT. Glutamate 278 functions as the Proton acceptor in the catalytic mechanism. Catalysis depends on cysteine 312, which acts as the Nucleophile. Glutamate 415 contributes to the NAD(+) binding site.

Belongs to the aldehyde dehydrogenase family. In terms of assembly, homotetramer.

The protein localises to the cytoplasm. It is found in the cytosol. It catalyses the reaction 4-(trimethylamino)butanal + NAD(+) + H2O = 4-(trimethylamino)butanoate + NADH + 2 H(+). The catalysed reaction is an aldehyde + NAD(+) + H2O = a carboxylate + NADH + 2 H(+). Its pathway is amine and polyamine biosynthesis; carnitine biosynthesis. Converts gamma-trimethylaminobutyraldehyde into gamma-butyrobetaine with high efficiency (in vitro). Can catalyze the irreversible oxidation of a broad range of aldehydes to the corresponding acids in an NAD-dependent reaction, but with low efficiency. The protein is 4-trimethylaminobutyraldehyde dehydrogenase B (aldh9a1b) of Danio rerio (Zebrafish).